Consider the following 388-residue polypeptide: Chitinase 4 (388 aa).

A GH18 domain is found at Phe22–Val375. Asn30 and Asn82 each carry an N-linked (GlcNAc...) asparagine glycan. Residues Asn82 to Gln83 and Gly109 to Gly112 contribute to the chitin site. N-linked (GlcNAc...) asparagine glycans are attached at residues Asn123 and Asn132. Glu151 acts as the Proton donor in catalysis. A chitin-binding site is contributed by Tyr152. Asn155 carries an N-linked (GlcNAc...) asparagine glycan. Residue Met208 to Asp211 coordinates chitin. Asn237 carries an N-linked (GlcNAc...) asparagine glycan. Residue Trp350 coordinates chitin.

This sequence belongs to the glycosyl hydrolase 18 family. Chitinase class V subfamily.

The protein localises to the secreted. It catalyses the reaction Random endo-hydrolysis of N-acetyl-beta-D-glucosaminide (1-&gt;4)-beta-linkages in chitin and chitodextrins.. In terms of biological role, chitinase involved in the remodeling of chitin in the fungal cell wall. Plays a role in sporulation. The polypeptide is Chitinase 4 (CHT4) (Candida albicans (strain SC5314 / ATCC MYA-2876) (Yeast)).